A 230-amino-acid polypeptide reads, in one-letter code: Large ribosomal subunit protein uL1 (230 aa).

The protein belongs to the universal ribosomal protein uL1 family. As to quaternary structure, part of the 50S ribosomal subunit.

Functionally, binds directly to 23S rRNA. The L1 stalk is quite mobile in the ribosome, and is involved in E site tRNA release. Protein L1 is also a translational repressor protein, it controls the translation of the L11 operon by binding to its mRNA. In Lactobacillus gasseri (strain ATCC 33323 / DSM 20243 / BCRC 14619 / CIP 102991 / JCM 1131 / KCTC 3163 / NCIMB 11718 / NCTC 13722 / AM63), this protein is Large ribosomal subunit protein uL1.